The chain runs to 316 residues: Probable cell division protein WhiA (316 aa).

Positions serine 274–asparagine 308 form a DNA-binding region, H-T-H motif.

Belongs to the WhiA family.

Functionally, involved in cell division and chromosome segregation. The protein is Probable cell division protein WhiA of Macrococcus caseolyticus (strain JCSC5402) (Macrococcoides caseolyticum).